Here is a 2641-residue protein sequence, read N- to C-terminus: Prosolanapyrone synthase (2641 aa).

The Ketosynthase family 3 (KS3) domain maps to 14-440; that stretch reads PEPIAIVGMG…GANGHCIIDD (427 aa). Residues C187, H323, and H363 each act as for beta-ketoacyl synthase activity in the active site. Positions 456-515 are disordered; the sequence is SIGHINGHTNGHTNGHTNGHTNGHTNGHTNGHTNGAHASDGHNGHHQNGMNGNSASHMSE. Residues 461–490 show a composition bias toward low complexity; the sequence is NGHTNGHTNGHTNGHTNGHTNGHTNGHTNG. The segment at 619–920 is malonyl-CoA:ACP transacylase (MAT); the sequence is FVFTGQGAQW…KGPVGQISRS (302 aa). The N-terminal hotdog fold stretch occupies residues 1011–1149; it reads HDLLGSKLPG…GRVRVIAGTS (139 aa). The segment at 1011 to 1309 is dehydratase (DH) domain; it reads HDLLGSKLPG…GNLRCVTYTE (299 aa). The PKS/mFAS DH domain maps to 1011 to 1313; the sequence is HDLLGSKLPG…CVTYTEVLPS (303 aa). H1043 serves as the catalytic Proton acceptor; for dehydratase activity. Residues 1161–1313 are C-terminal hotdog fold; it reads ARTLDTKAWY…CVTYTEVLPS (153 aa). Residue D1227 is the Proton donor; for dehydratase activity of the active site. Residues 1477–1665 are methyltransferase (MT) domain; that stretch reads TGAYPQLVRF…GAELVLDDYP (189 aa). The enoyl reductase (ER) domain stretch occupies residues 1894–2206; that stretch reads GLLTSLYFKP…KGTHVGKLVV (313 aa). Positions 2231 to 2408 are ketoreductase (KR) domain; sequence NYLITGGLGG…STVSFGLIRD (178 aa). One can recognise a Carrier domain in the interval 2561 to 2639; the sequence is RTVALVTDAI…ILANKIVDGA (79 aa). S2598 is subject to O-(pantetheine 4'-phosphoryl)serine.

Its pathway is phytotoxin biosynthesis. In terms of biological role, prosolanapyrone synthase; part of the gene cluster that mediates the biosynthesis of the phytotoxin solanapyrone, a causal agent of early blight disease of potato and tomato. The prosolanapyrone synthase sol1 is a polyketide synthase that produces the octaketide desmethylprosolanapyrone I via sequential condensations of 7 malonyl-CoA units with one acetyl-CoA unit, and one methylation step. The octaketide backbone is further methylated by the sol2 O-methyltransferase to yield prosolanapyrone I. Prosolanapyrone I is hydroxylated to prosolanapyrone II by the cytochrome P450 monooxygenase sol6. The solanapyrone synthase sol5 then catalyzes the oxidation of prosolanapyrone II and the subsequent Diels Alder cycloisomerization of the product prosolanapyrone III to solanapyrones A and D. Solanapyrones A and D are then converted into solanapyrones B and E, respectively, by the sol3 dehydrogenase. The sequence is that of Prosolanapyrone synthase (sol1) from Alternaria solani.